A 786-amino-acid polypeptide reads, in one-letter code: Cadherin-9 (786 aa).

The N-terminal stretch at M1–N21 is a signal peptide. A glycan (N-linked (GlcNAc...) asparagine) is linked at N21. Residues S22–R52 constitute a propeptide that is removed on maturation. The Extracellular portion of the chain corresponds to S22–A614. 5 Cadherin domains span residues W54–F158, T159–F267, P268–F382, S383–F487, and F487–L604. N254 carries an N-linked (GlcNAc...) asparagine glycan. Residues N454 and N535 are each glycosylated (N-linked (GlcNAc...) asparagine). Residues L615 to L635 traverse the membrane as a helical segment. Residues K636 to D786 lie on the Cytoplasmic side of the membrane. S785 is modified (phosphoserine).

It localises to the cell membrane. Cadherins are calcium-dependent cell adhesion proteins. They preferentially interact with themselves in a homophilic manner in connecting cells; cadherins may thus contribute to the sorting of heterogeneous cell types. In Mus musculus (Mouse), this protein is Cadherin-9 (Cdh9).